The sequence spans 803 residues: Dynein axonemal intermediate chain 4 (803 aa).

A compositionally biased stretch (polar residues) spans 1–33; sequence MPSSPTSTRKQTNFTASVSAQSRKSISFGNPKS. Disordered stretches follow at residues 1-41, 88-109, and 143-163; these read MPSS…GYAG, LYHP…SQEG, and STVS…LEDP. Low complexity predominate over residues 143–155; it reads STVSKSSISTTES. WD repeat units lie at residues 492–532, 541–589, 616–656, 660–700, 703–742, and 748–787; these read QSPY…NTPV, KHLG…DCHD, SRQA…QYLE, GHKG…PFFT, PTTY…LDPL, and NPGI…TPTE.

Part of the multisubunit axonemal dynein complex formed at least of two heavy chains and a number of intermediate and light chains. Associated with axonemal dynein subunits such as, DNAH2, DNAI3, and DYNLT1. Interacts with DYNLT1.

The protein localises to the cytoplasm. Its subcellular location is the cytoskeleton. The protein resides in the flagellum axoneme. It is found in the cilium axoneme. It localises to the dynein axonemal particle. Its function is as follows. Plays a critical role in the assembly of axonemal dynein complex, thereby playing a role in ciliary motility. The chain is Dynein axonemal intermediate chain 4 from Rattus norvegicus (Rat).